A 243-amino-acid chain; its full sequence is Vesicle-associated membrane protein-associated protein B (243 aa).

Ala2 is subject to N-acetylalanine. Over 2–218 (AKVEQVLSLE…PASAMAGKEE (217 aa)) the chain is Cytoplasmic. Residues 7–124 (VLSLEPQHEL…MDSKLRCVFE (118 aa)) form the MSP domain. A Phosphoserine modification is found at Ser146. A Glycyl lysine isopeptide (Lys-Gly) (interchain with G-Cter in SUMO1) cross-link involves residue Lys147. Position 150 is a phosphothreonine (Thr150). 3 positions are modified to phosphoserine: Ser158, Ser159, and Ser160. Residues 161-196 (LDDTEVKKVMEECKRLQSEVQRLREENKQFKEEDGL) are a coiled coil. A compositionally biased stretch (basic and acidic residues) spans 186–197 (ENKQFKEEDGLR). Residues 186 to 214 (ENKQFKEEDGLRMRKTAQSNSPAPASAMA) are disordered. Phosphoserine is present on Ser206. The helical; Anchor for type IV membrane protein transmembrane segment at 219 to 239 (GLSTRLLALVVLFFIVGVIIG) threads the bilayer.

This sequence belongs to the VAMP-associated protein (VAP) (TC 9.B.17) family. As to quaternary structure, homodimer, and heterodimer with VAPA. Interacts with VAMP1 and VAMP2. Interacts (via MSP domain) with ZFYVE27. Interacts with RMDN3. Interacts with KIF5A in a ZFYVE27-dependent manner. Interacts (via MSP domain) with STARD3 (via phospho-FFAT motif). Interacts with STARD3NL (via FFAT motif). Interacts with CERT1. Interacts with PLEKHA3 and SACM1L to form a ternary complex. Interacts with VPS13A (via FFAT motif). Interacts with RB1CC1 (via phosphorylated FFAT motif), MIGA2 (via phosphorylated FFAT motif), RMDN3 (via phosphorylated FFAT motif), OSBPL1A (via FFAT motif), KCNB1 (via phosphorylated FFAT motif) and KCNB2 (via phosphorylated FFAT motif). Interacts (via MSP domain) with WDR44 (via FFAT motif); the interactions connect the endoplasmic reticulum (ER) with the endosomal tubule.

The protein localises to the endoplasmic reticulum membrane. Its function is as follows. Endoplasmic reticulum (ER)-anchored protein that mediates the formation of contact sites between the ER and endosomes via interaction with FFAT motif-containing proteins such as STARD3 or WDR44. Interacts with STARD3 in a FFAT motif phosphorylation dependent manner. Via interaction with WDR44 participates in neosynthesized protein export. Participates in the endoplasmic reticulum unfolded protein response (UPR) by inducing ERN1/IRE1 activity. Involved in cellular calcium homeostasis regulation. This is Vesicle-associated membrane protein-associated protein B from Bos taurus (Bovine).